A 155-amino-acid chain; its full sequence is Ribosome maturation factor RimP (155 aa).

It belongs to the RimP family.

The protein resides in the cytoplasm. Required for maturation of 30S ribosomal subunits. In Synechococcus sp. (strain CC9605), this protein is Ribosome maturation factor RimP.